We begin with the raw amino-acid sequence, 483 residues long: ATP synthase subunit beta (483 aa).

Residue 162-169 (GGAGVGKT) coordinates ATP.

It belongs to the ATPase alpha/beta chains family. In terms of assembly, F-type ATPases have 2 components, CF(1) - the catalytic core - and CF(0) - the membrane proton channel. CF(1) has five subunits: alpha(3), beta(3), gamma(1), delta(1), epsilon(1). CF(0) has four main subunits: a(1), b(1), b'(1) and c(9-12).

The protein resides in the cellular thylakoid membrane. It carries out the reaction ATP + H2O + 4 H(+)(in) = ADP + phosphate + 5 H(+)(out). In terms of biological role, produces ATP from ADP in the presence of a proton gradient across the membrane. The catalytic sites are hosted primarily by the beta subunits. This is ATP synthase subunit beta from Synechocystis sp. (strain ATCC 27184 / PCC 6803 / Kazusa).